A 97-amino-acid chain; its full sequence is Coiled-coil domain-containing protein 167 (97 aa).

Positions 10–79 (GVALEIDGLE…LRQENRKNML (70 aa)) form a coiled coil. Residues 78–95 (MLLSVAIFILLTLVYAYW) traverse the membrane as a helical segment.

It is found in the membrane. In Homo sapiens (Human), this protein is Coiled-coil domain-containing protein 167 (CCDC167).